A 424-amino-acid chain; its full sequence is Lipoamide acyltransferase component of branched-chain alpha-keto acid dehydrogenase complex (424 aa).

The Lipoyl-binding domain occupies 3–78 (IEQMTMPQLG…QVGEMICKIE (76 aa)). K44 carries the N6-lipoyllysine modification. The disordered stretch occupies residues 82–115 (ANPAEQKQEQPAASEAAENPVAKSAGAADQPNKK). Positions 116-153 (RYSPAVLRLAGEHGIDLDQVTGTGAGGRITRKDIQRLI) constitute a Peripheral subunit-binding (PSBD) domain. The tract at residues 154–193 (ETGGVQEQNPEELKTAAPAPKSASKPEPKEETSYPASAAG) is disordered. Active-site residues include H395 and D399.

It belongs to the 2-oxoacid dehydrogenase family. Forms a 24-polypeptide structural core with octahedral symmetry. (R)-lipoate serves as cofactor.

The catalysed reaction is N(6)-[(R)-dihydrolipoyl]-L-lysyl-[protein] + 2-methylpropanoyl-CoA = N(6)-[(R)-S(8)-2-methylpropanoyldihydrolipoyl]-L-lysyl-[protein] + CoA. Functionally, the branched-chain alpha-keto dehydrogenase complex catalyzes the overall conversion of alpha-keto acids to acyl-CoA and CO(2). It contains multiple copies of three enzymatic components: branched-chain alpha-keto acid decarboxylase (E1), lipoamide acyltransferase (E2) and lipoamide dehydrogenase (E3). The protein is Lipoamide acyltransferase component of branched-chain alpha-keto acid dehydrogenase complex (bfmBB) of Bacillus subtilis (strain 168).